We begin with the raw amino-acid sequence, 62 residues long: Chromatin protein Cren7 1 (62 aa).

Belongs to the Cren7 family. Monomer. Post-translationally, methylated at multiple sites, to varying extents.

The protein resides in the chromosome. It localises to the cytoplasm. In terms of biological role, a chromatin protein, binds double-stranded DNA without sequence specificity. Constrains negative DNA supercoils. This chain is Chromatin protein Cren7 1 (cren7-1), found in Hyperthermus butylicus (strain DSM 5456 / JCM 9403 / PLM1-5).